A 269-amino-acid chain; its full sequence is Eukaryotic translation initiation factor 3 subunit G-1 (269 aa).

An RRM domain is found at 188–266 (AAIRISNLSE…LILSVEWSKP (79 aa)).

The protein belongs to the eIF-3 subunit G family. Component of the eukaryotic translation initiation factor 3 (eIF-3) complex. The eIF-3 complex interacts with pix.

It localises to the cytoplasm. Functionally, RNA-binding component of the eukaryotic translation initiation factor 3 (eIF-3) complex, which is involved in protein synthesis of a specialized repertoire of mRNAs and, together with other initiation factors, stimulates binding of mRNA and methionyl-tRNAi to the 40S ribosome. The eIF-3 complex specifically targets and initiates translation of a subset of mRNAs involved in cell proliferation. This subunit can bind 18S rRNA. The polypeptide is Eukaryotic translation initiation factor 3 subunit G-1 (Drosophila erecta (Fruit fly)).